The primary structure comprises 71 residues: MTQLLLFLVALLVLGHVPSGRSEFKRCWKGQGACQTYCTRQETYMHLCPDASLCCLSYALKPPPVPKHEYE.

The first 22 residues, 1–22 (MTQLLLFLVALLVLGHVPSGRS), serve as a signal peptide directing secretion. Cystine bridges form between Cys27–Cys54, Cys34–Cys48, and Cys38–Cys55.

The protein belongs to the beta-defensin family.

It localises to the secreted. In terms of biological role, has antibacterial activity. The sequence is that of Beta-defensin 124 (DEFB124) from Homo sapiens (Human).